Consider the following 244-residue polypeptide: MSVESRVLVVDAGNTSIKFTAFEGEQVLWVLRGDSCPAETDFAPQVIYFASVRSKEQSALLHADVQAAFPSSEWITLTSQATACCVRNAYIEPERLGIDRWLGVVAAHHLIKGNVVVVDAGTAIKVDVVNSEGAHLGGYIAPGLAMMTESLLSKTARIRFDSHEVVEGEGLPNSTARAVTEGCHEMALGFLERIHHLYPEFKWVVTGGDAQALLNRLGIALECFPNLVALGAKLVGDEQLRGNK.

ATP is bound at residue 11-18 (DAGNTSIK). Substrate contacts are provided by residues Tyr90 and 97–100 (GIDR). Asp99 functions as the Proton acceptor in the catalytic mechanism. Asp119 contributes to the K(+) binding site. Thr122 is an ATP binding site. Thr175 contacts substrate.

It belongs to the type III pantothenate kinase family. In terms of assembly, homodimer. It depends on NH4(+) as a cofactor. K(+) serves as cofactor.

Its subcellular location is the cytoplasm. It carries out the reaction (R)-pantothenate + ATP = (R)-4'-phosphopantothenate + ADP + H(+). Its pathway is cofactor biosynthesis; coenzyme A biosynthesis; CoA from (R)-pantothenate: step 1/5. In terms of biological role, catalyzes the phosphorylation of pantothenate (Pan), the first step in CoA biosynthesis. This is Type III pantothenate kinase from Marinomonas sp. (strain MWYL1).